Here is a 149-residue protein sequence, read N- to C-terminus: UPF0178 protein SERP0336 (149 aa).

Belongs to the UPF0178 family.

This Staphylococcus epidermidis (strain ATCC 35984 / DSM 28319 / BCRC 17069 / CCUG 31568 / BM 3577 / RP62A) protein is UPF0178 protein SERP0336.